Here is a 367-residue protein sequence, read N- to C-terminus: Quinolinate synthase (367 aa).

Iminosuccinate is bound by residues H45 and S62. C109 is a [4Fe-4S] cluster binding site. Iminosuccinate contacts are provided by residues 140–142 and S161; that span reads YVN. C229 provides a ligand contact to [4Fe-4S] cluster. Iminosuccinate is bound by residues 255-257 and T272; that span reads HPE. C319 lines the [4Fe-4S] cluster pocket.

It belongs to the quinolinate synthase family. Type 3 subfamily. It depends on [4Fe-4S] cluster as a cofactor.

The protein resides in the cytoplasm. The enzyme catalyses iminosuccinate + dihydroxyacetone phosphate = quinolinate + phosphate + 2 H2O + H(+). It participates in cofactor biosynthesis; NAD(+) biosynthesis; quinolinate from iminoaspartate: step 1/1. Catalyzes the condensation of iminoaspartate with dihydroxyacetone phosphate to form quinolinate. The protein is Quinolinate synthase of Geobacillus sp. (strain WCH70).